We begin with the raw amino-acid sequence, 179 residues long: Transcription factor NF-E4 (179 aa).

Lys43 carries the N6-acetyllysine modification. Residues 100–179 are disordered; that stretch reads AMKATGPHNA…QLPSLHLSQG (80 aa). Composition is skewed to polar residues over residues 143-153 and 163-179; these read LSQSNPPTRIS and ALEQTPQQLPSLHLSQG.

Component of the SSP (stage selector protein) complex, which appears to be a heteromer of TFCP2 and 2 copies of NFE4. Interacts with HDAC1 and PCAF. Isoform 2 interacts with TFCP2. In terms of processing, acetylation at Lys-43 prolongs the protein half-life by preventing ubiquitin-mediated degradation and reduces the interaction between NF-E4 and HDAC1, potentially maximizing the activating ability of the factor at the gamma-promoter. Ubiquitinated; leading to its degradation by the proteasome. Acetylation at Lys-43 prevents ubiquitination. As to expression, specifically expressed in fetal liver, cord blood and bone marrow. Also expressed in the K562 and HEL cell lines, which constitutively express the fetal globin genes.

The protein resides in the nucleus. In terms of biological role, functions as part of the SSP (stage selector protein) complex, a complex that contributes to the preferential expression of the gamma-gene in fetal erythroid cells by facilitating the interaction of the gamma-globin genes with enhancer elements contained in the locus control region (LCR). The complex binds to the stage selector element (SSE) in the proximal gamma-globin promoter. In contrast, isoform 2 acts as a repressor of gamma-globin gene expression by preventing NFE2 and RNA polymerase II recruitment to the promoter. The sequence is that of Transcription factor NF-E4 (NFE4) from Homo sapiens (Human).